Consider the following 852-residue polypeptide: DNA mismatch repair protein MutS (852 aa).

An ATP-binding site is contributed by 602–609; sequence GPNMSGKS.

The protein belongs to the DNA mismatch repair MutS family.

Functionally, this protein is involved in the repair of mismatches in DNA. It is possible that it carries out the mismatch recognition step. This protein has a weak ATPase activity. The polypeptide is DNA mismatch repair protein MutS (Streptococcus thermophilus (strain ATCC BAA-491 / LMD-9)).